We begin with the raw amino-acid sequence, 953 residues long: Xylosyltransferase 1 (953 aa).

The Cytoplasmic segment spans residues 1–17; the sequence is MVAAPCARRLARRSHSA. Residues 18 to 38 traverse the membrane as a helical; Signal-anchor for type II membrane protein segment; the sequence is LLAALMVLLLHTLVVWNFSSL. Topologically, residues 39–953 are lumenal; it reads DSGAGEQRRA…GAVKPDGRLR (915 aa). Over residues 48–62 the composition is skewed to low complexity; that stretch reads AGAAAGAAEQQQPAA. Disordered regions lie at residues 48 to 67 and 74 to 251; these read AGAA…RRER and LPAA…APKC. The span at 79–97 shows a compositional bias: gly residues; sequence GGPGGRAGGGGARGGGPGG. Basic and acidic residues predominate over residues 138–154; it reads KVRTDSNNENSVPKDFE. Residues 156–165 show a composition bias toward polar residues; the sequence is VDNSNFAPRT. Basic and acidic residues-rich tracts occupy residues 170–197 and 205–216; these read HQPE…DKRQ and GPKEVLPPREKA. N-linked (GlcNAc...) asparagine glycosylation occurs at Asn219. Intrachain disulfides connect Cys251/Cys279, Cys295/Cys536, Cys555/Cys568, and Cys557/Cys566. UDP-alpha-D-xylose-binding positions include Val327, Asp355, and 384 to 386; that span reads TIW. Residue Asn415 is glycosylated (N-linked (GlcNAc...) asparagine). Residue 488 to 489 coordinates UDP-alpha-D-xylose; that stretch reads DW. Residues Ser569 and 592 to 593 contribute to the UDP-alpha-D-xylose site; that span reads RK. Intrachain disulfides connect Cys669/Cys921 and Cys914/Cys927. Asn771 carries an N-linked (GlcNAc...) asparagine glycan. Positions 933 to 953 are disordered; the sequence is SSFSPDPKSELGAVKPDGRLR.

Belongs to the glycosyltransferase 14 family. XylT subfamily. As to quaternary structure, monomer. A divalent metal cation serves as cofactor. Post-translationally, contains 7 disulfide bonds. In terms of processing, N-glycosylated. In terms of tissue distribution, detected in brain, spleen, kidney and testis, and at low levels in skeletal muscle.

It localises to the golgi apparatus membrane. The enzyme catalyses UDP-alpha-D-xylose + L-seryl-[protein] = 3-O-(beta-D-xylosyl)-L-seryl-[protein] + UDP + H(+). Its pathway is glycan metabolism; chondroitin sulfate biosynthesis. It functions in the pathway glycan metabolism; heparan sulfate biosynthesis. Its function is as follows. Catalyzes the first step in the biosynthesis of chondroitin sulfate and dermatan sulfate proteoglycans, such as DCN. Transfers D-xylose from UDP-D-xylose to specific serine residues of the core protein. Required for normal maturation of chondrocytes during bone development, normal onset of ossification and normal embryonic and postnatal skeleton development, especially of the long bones. This Mus musculus (Mouse) protein is Xylosyltransferase 1 (Xylt1).